A 156-amino-acid polypeptide reads, in one-letter code: Small ribosomal subunit protein uS7 (156 aa).

It belongs to the universal ribosomal protein uS7 family. Part of the 30S ribosomal subunit. Contacts proteins S9 and S11.

Its function is as follows. One of the primary rRNA binding proteins, it binds directly to 16S rRNA where it nucleates assembly of the head domain of the 30S subunit. Is located at the subunit interface close to the decoding center, probably blocks exit of the E-site tRNA. The protein is Small ribosomal subunit protein uS7 of Bacillus cereus (strain G9842).